We begin with the raw amino-acid sequence, 95 residues long: Mammaglobin-B (95 aa).

The signal sequence occupies residues 1 to 18 (MKLLMVLMLAALLLHCYA). The N-linked (GlcNAc...) asparagine glycan is linked to Asn68.

In terms of assembly, heterodimer of a lipophilin A and a lipophilin C (mammaglobin B) monomer associated head to head. In terms of tissue distribution, expressed in thymus, trachea, kidney, steroid responsive tissues (prostate, testis, uterus, breast and ovary) and salivary gland.

It is found in the secreted. Its function is as follows. May bind androgens and other steroids, may also bind estramustine, a chemotherapeutic agent used for prostate cancer. May be under transcriptional regulation of steroid hormones. The sequence is that of Mammaglobin-B (SCGB2A1) from Homo sapiens (Human).